The following is a 67-amino-acid chain: Phycobilisome 7.8 kDa linker polypeptide, allophycocyanin-associated, core (67 aa).

Positions 1–56 constitute a CpcD-like domain; the sequence is MRMFKITACVPSQTRIRTQRELQNTYFTKLVPYENWFREQQRIQKMGGKIVKVELF.

It belongs to the phycobilisome linker protein family.

It localises to the cellular thylakoid membrane. Functionally, rod linker protein, associated with allophycocyanin. Linker polypeptides determine the state of aggregation and the location of the disk-shaped phycobiliprotein units within the phycobilisome and modulate their spectroscopic properties in order to mediate a directed and optimal energy transfer. This chain is Phycobilisome 7.8 kDa linker polypeptide, allophycocyanin-associated, core (apcC), found in Thermosynechococcus vestitus (strain NIES-2133 / IAM M-273 / BP-1).